The following is a 1138-amino-acid chain: Eukaryotic translation initiation factor 3 subunit A (1138 aa).

The region spanning 319-502 is the PCI domain; the sequence is LQRMAAHVLL…NSIYFGTDLT (184 aa). Disordered regions lie at residues 590-633 and 817-1138; these read NNAR…NEIQ and ERFR…VKRR. Composition is skewed to basic and acidic residues over residues 817 to 903, 923 to 967, 1003 to 1049, and 1058 to 1078; these read ERFR…RVER, DRNE…KEND, GRDD…DQPQ, and DSPRQNDRDNRRTTGERRDVR. The segment covering 1082 to 1100 has biased composition (gly residues); that stretch reads PKEGGGGVSGGGAGGGGGN. The segment covering 1107 to 1128 has biased composition (basic and acidic residues); the sequence is PREEKAPPKREQAQDKENKAGD.

It belongs to the eIF-3 subunit A family. As to quaternary structure, component of the eukaryotic translation initiation factor 3 (eIF-3) complex. The eIF-3 complex interacts with pix.

It is found in the cytoplasm. Its function is as follows. RNA-binding component of the eukaryotic translation initiation factor 3 (eIF-3) complex, which is involved in protein synthesis of a specialized repertoire of mRNAs and, together with other initiation factors, stimulates binding of mRNA and methionyl-tRNAi to the 40S ribosome. The eIF-3 complex specifically targets and initiates translation of a subset of mRNAs involved in cell proliferation. The polypeptide is Eukaryotic translation initiation factor 3 subunit A (Drosophila virilis (Fruit fly)).